The following is a 391-amino-acid chain: Ferrochelatase (391 aa).

2 residues coordinate Fe cation: His196 and Glu281.

It belongs to the ferrochelatase family.

It localises to the cytoplasm. It catalyses the reaction heme b + 2 H(+) = protoporphyrin IX + Fe(2+). Its pathway is porphyrin-containing compound metabolism; protoheme biosynthesis; protoheme from protoporphyrin-IX: step 1/1. In terms of biological role, catalyzes the ferrous insertion into protoporphyrin IX. The protein is Ferrochelatase of Prochlorococcus marinus (strain AS9601).